The following is a 203-amino-acid chain: 3-isopropylmalate dehydratase small subunit (203 aa).

This sequence belongs to the LeuD family. LeuD type 1 subfamily. As to quaternary structure, heterodimer of LeuC and LeuD.

It carries out the reaction (2R,3S)-3-isopropylmalate = (2S)-2-isopropylmalate. It participates in amino-acid biosynthesis; L-leucine biosynthesis; L-leucine from 3-methyl-2-oxobutanoate: step 2/4. Its function is as follows. Catalyzes the isomerization between 2-isopropylmalate and 3-isopropylmalate, via the formation of 2-isopropylmaleate. The polypeptide is 3-isopropylmalate dehydratase small subunit (Symbiobacterium thermophilum (strain DSM 24528 / JCM 14929 / IAM 14863 / T)).